A 338-amino-acid chain; its full sequence is Probable beta-1,4-xylosyltransferase IRX9 (338 aa).

The disordered stretch occupies residues 1–21; it reads MASAGGCKKKTGNSRSRSPRS. At 1-27 the chain is on the cytoplasmic side; sequence MASAGGCKKKTGNSRSRSPRSPVVLRR. The helical; Signal-anchor for type II membrane protein transmembrane segment at 28-46 threads the bilayer; it reads AMLHSSLCFLVGLLAGLAA. Residues 47-338 lie on the Lumenal side of the membrane; sequence PSDWPAAAGA…IMLWRIQTTL (292 aa). N-linked (GlcNAc...) asparagine glycans are attached at residues asparagine 232 and asparagine 314.

Belongs to the glycosyltransferase 43 family.

It localises to the golgi apparatus membrane. Its function is as follows. Probable beta-1,4-xylosyltransferase involved in xylan biosynthesis in cell walls. This is Probable beta-1,4-xylosyltransferase IRX9 from Oryza sativa subsp. japonica (Rice).